A 263-amino-acid chain; its full sequence is MLTITAIKAFNDNYIWVLQQQPHTQVYVVDPGDASVVIDYLEANQLTLAGILLTHHHNDHTGGVAELQAYSQNRLTVYGPDNEKIEGITHPLNATAQPRFILDYMSGELQVLDVPGHTAGHIAYVIADALFCGDTLFSAGCGRLFEGTPAQMLNSLQQLAQLPADTRVYCAHEYTLSNLKFALAVNPNNRALQDYNERAVALRRQDKATIPSTIALERAINPFLRASDTEIVDSIKQHFSDLNHANLDELGGFTLLRQWKDNF.

Zn(2+) is bound by residues His-55, His-57, Asp-59, His-60, His-117, Asp-134, and His-172.

It belongs to the metallo-beta-lactamase superfamily. Glyoxalase II family. Monomer. Requires Zn(2+) as cofactor.

The enzyme catalyses an S-(2-hydroxyacyl)glutathione + H2O = a 2-hydroxy carboxylate + glutathione + H(+). The protein operates within secondary metabolite metabolism; methylglyoxal degradation; (R)-lactate from methylglyoxal: step 2/2. Its function is as follows. Thiolesterase that catalyzes the hydrolysis of S-D-lactoyl-glutathione to form glutathione and D-lactic acid. The chain is Hydroxyacylglutathione hydrolase from Shewanella baltica (strain OS155 / ATCC BAA-1091).